A 334-amino-acid polypeptide reads, in one-letter code: Holliday junction branch migration complex subunit RuvB (334 aa).

Positions 1 to 179 (MTHKISVLHQ…FAFTGRVDYY (179 aa)) are large ATPase domain (RuvB-L). Residues L18, R19, G60, K63, T64, S65, 126 to 128 (EDF), R169, Y179, and R216 each bind ATP. T64 provides a ligand contact to Mg(2+). Residues 180-250 (TDEDLVSILS…VAEKALAMLL (71 aa)) form a small ATPAse domain (RuvB-S) region. The interval 253-334 (NLGLNEIDIK…RNPKDRWGEE (82 aa)) is head domain (RuvB-H). Residues R308 and R313 each contribute to the DNA site.

Belongs to the RuvB family. As to quaternary structure, homohexamer. Forms an RuvA(8)-RuvB(12)-Holliday junction (HJ) complex. HJ DNA is sandwiched between 2 RuvA tetramers; dsDNA enters through RuvA and exits via RuvB. An RuvB hexamer assembles on each DNA strand where it exits the tetramer. Each RuvB hexamer is contacted by two RuvA subunits (via domain III) on 2 adjacent RuvB subunits; this complex drives branch migration. In the full resolvosome a probable DNA-RuvA(4)-RuvB(12)-RuvC(2) complex forms which resolves the HJ.

The protein localises to the cytoplasm. It catalyses the reaction ATP + H2O = ADP + phosphate + H(+). The RuvA-RuvB-RuvC complex processes Holliday junction (HJ) DNA during genetic recombination and DNA repair, while the RuvA-RuvB complex plays an important role in the rescue of blocked DNA replication forks via replication fork reversal (RFR). RuvA specifically binds to HJ cruciform DNA, conferring on it an open structure. The RuvB hexamer acts as an ATP-dependent pump, pulling dsDNA into and through the RuvAB complex. RuvB forms 2 homohexamers on either side of HJ DNA bound by 1 or 2 RuvA tetramers; 4 subunits per hexamer contact DNA at a time. Coordinated motions by a converter formed by DNA-disengaged RuvB subunits stimulates ATP hydrolysis and nucleotide exchange. Immobilization of the converter enables RuvB to convert the ATP-contained energy into a lever motion, pulling 2 nucleotides of DNA out of the RuvA tetramer per ATP hydrolyzed, thus driving DNA branch migration. The RuvB motors rotate together with the DNA substrate, which together with the progressing nucleotide cycle form the mechanistic basis for DNA recombination by continuous HJ branch migration. Branch migration allows RuvC to scan DNA until it finds its consensus sequence, where it cleaves and resolves cruciform DNA. This Chlamydia trachomatis serovar L2 (strain ATCC VR-902B / DSM 19102 / 434/Bu) protein is Holliday junction branch migration complex subunit RuvB.